The sequence spans 546 residues: MVNESLNQEESNDRPVPESEFQADTSYSTQPSVSIHPSVSGHPSVSIHPSVSGHPSVSIDPSVSVHPSSSAHPSTLAQPSGLTHPNELVKEDSVIKVSKRRWAVVLVFSCYSLCNAFQWIQYGSINNIFMNFYGVSAFAIDWLSMCYMLTYIPLLLPVAWMLEKFGLRTIAITGSALNCLGAWVKLGSLEPHLFPVTMVGQVICSVAQVFILGMPSRIASVWFGANEVSTACSMAVFGNQLGIAIGFLVPPVLVPNIKDQEKLAYHISIMFYIIGGVATLLFILVIIVFKEKPKYPPSRAQSLSYALATTDASYLSSIVRLFKNLNFVLLVITYGLNAGAFYALSTLLNRMVIMHFPGQEVNAGRIGLTIVIAGMFGAMISGIWLDKSKTYKETTLVVYIMTLVGMVVYTFTLNLNHLWIVFITADSLGFFMTGYLPLGFEFAVELTYPESEGVSSGLLNVSAQVFGIIFTISQGQIIDNYGSVPGNIFLCVFLALGSALTAFIKSDLRRQRANKDAPETKVQEEEEEEEESNTSKVPTVLSEAHL.

The tract at residues 1–84 is disordered; that stretch reads MVNESLNQEE…TLAQPSGLTH (84 aa). Topologically, residues 1–93 are cytoplasmic; that stretch reads MVNESLNQEE…HPNELVKEDS (93 aa). The segment covering 22–49 has biased composition (polar residues); the sequence is QADTSYSTQPSVSIHPSVSGHPSVSIHP. 7 repeat units span residues 31–36, 37–42, 43–48, 49–54, 55–60, 61–66, and 67–72. Residues 31 to 84 are 9 X 6 AA tandem repeats of P-S-[VS]-S-[VIAG]-[HD]; the sequence is PSVSIHPSVSGHPSVSIHPSVSGHPSVSIDPSVSVHPSSSAHPSTLAQPSGLTH. The span at 54–74 shows a compositional bias: low complexity; sequence HPSVSIDPSVSVHPSSSAHPS. An 8; approximate repeat occupies 73–78; the sequence is PSTLAQ. One copy of the 9; approximate repeat lies at 79 to 84; the sequence is PSGLTH. Residues 94 to 118 traverse the membrane as a helical segment; it reads VIKVSKRRWAVVLVFSCYSLCNAFQ. Choline contacts are provided by Asn115, Ala116, and Trp119. At 119-136 the chain is on the extracellular side; sequence WIQYGSINNIFMNFYGVS. The chain crosses the membrane as a helical span at residues 137–164; that stretch reads AFAIDWLSMCYMLTYIPLLLPVAWMLEK. Residues 165-166 lie on the Cytoplasmic side of the membrane; the sequence is FG. Residues 167 to 186 traverse the membrane as a helical segment; the sequence is LRTIAITGSALNCLGAWVKL. Residues 187 to 193 are Extracellular-facing; it reads GSLEPHL. The helical transmembrane segment at 194–222 threads the bilayer; the sequence is FPVTMVGQVICSVAQVFILGMPSRIASVW. Position 212 (Leu212) interacts with choline. The Cytoplasmic portion of the chain corresponds to 223–227; it reads FGANE. Residues 228-253 traverse the membrane as a helical segment; that stretch reads VSTACSMAVFGNQLGIAIGFLVPPVL. Topologically, residues 254-258 are extracellular; it reads VPNIK. A helical membrane pass occupies residues 259-288; the sequence is DQEKLAYHISIMFYIIGGVATLLFILVIIV. The Cytoplasmic portion of the chain corresponds to 289–324; sequence FKEKPKYPPSRAQSLSYALATTDASYLSSIVRLFKN. The chain crosses the membrane as a helical span at residues 325-355; that stretch reads LNFVLLVITYGLNAGAFYALSTLLNRMVIMH. Residue Tyr342 coordinates choline. The Extracellular segment spans residues 356 to 359; sequence FPGQ. Residues 360-388 traverse the membrane as a helical segment; that stretch reads EVNAGRIGLTIVIAGMFGAMISGIWLDKS. Residues 389 to 390 lie on the Cytoplasmic side of the membrane; it reads KT. Residues 391-413 traverse the membrane as a helical segment; the sequence is YKETTLVVYIMTLVGMVVYTFTL. The Extracellular segment spans residues 414-416; it reads NLN. Residues 417–446 traverse the membrane as a helical segment; it reads HLWIVFITADSLGFFMTGYLPLGFEFAVEL. Over 447–454 the chain is Cytoplasmic; that stretch reads TYPESEGV. A helical transmembrane segment spans residues 455–480; it reads SSGLLNVSAQVFGIIFTISQGQIIDN. Choline is bound at residue Gln464. At 481-482 the chain is on the extracellular side; that stretch reads YG. The helical transmembrane segment at 483-505 threads the bilayer; that stretch reads SVPGNIFLCVFLALGSALTAFIK. The Cytoplasmic portion of the chain corresponds to 506-546; that stretch reads SDLRRQRANKDAPETKVQEEEEEEEESNTSKVPTVLSEAHL. The segment covering 511 to 523 has biased composition (basic and acidic residues); the sequence is QRANKDAPETKVQ. The interval 511 to 546 is disordered; the sequence is QRANKDAPETKVQEEEEEEEESNTSKVPTVLSEAHL. Position 535 is a phosphoserine (Ser535).

Belongs to the major facilitator superfamily. Feline leukemia virus subgroup C receptor (TC 2.A.1.28.1) family. As to quaternary structure, interacts with components of electron transfer chain complexes III, IV and V including CYC1, NDUFA4, COX4I1, ATP5PD and ATP5F1C; these interactions occur in the absence of heme and are disrupted upon heme binding. Interacts with ATP2A2; this interaction occurs in the absence of heme and promotes ATP2A2 proteasomal degradation; the complex is dissociated upon heme binding. Interacts with HMOX1; this interaction is potentiated in the presence of heme.

It is found in the cell membrane. The protein localises to the mitochondrion membrane. It localises to the endoplasmic reticulum membrane. It catalyses the reaction choline(out) = choline(in). The enzyme catalyses ethanolamine(in) = ethanolamine(out). It carries out the reaction heme b(in) = heme b(out). Functionally, choline uniporter that specifically mediates choline uptake at the blood-brain-barrier. Responsible for the majority of choline uptake across the blood-brain-barrier from the circulation into the brain. Choline, a nutrient critical for brain development, is a precursor of phosphatidylcholine, as well as betaine. Also mediates transport of ethanolamine. Choline and ethanolamine transport is not coupled with proton transport and is exclusively driven by the choline gradient across the plasma membrane. However, the presence of an inwardly directed proton gradient enhances choline uptake. Also acts as a heme b transporter. Required to regulate mitochondrial respiration processes, ATP synthesis and thermogenesis. At low heme levels, interacts with components of electron transfer chain (ETC) complexes and ATP2A2, leading to ubiquitin-mediated degradation of ATP2A2 and inhibition of thermogenesis. Upon heme binding, dissociates from ETC complexes to allow switching from mitochondrial ATP synthesis to thermogenesis. This chain is Choline/ethanolamine transporter FLVCR2 (Flvcr2), found in Rattus norvegicus (Rat).